Consider the following 272-residue polypeptide: Large ribosomal subunit protein uL2 (272 aa).

The disordered stretch occupies residues 222–272 (GTAMNPVDHPHGGGEGRNFGKHPVSPWGKKTKGKKTRNNRLTDKFIVHRRS). Residues 250–259 (KKTKGKKTRN) show a composition bias toward basic residues. Basic and acidic residues predominate over residues 261 to 272 (RLTDKFIVHRRS).

This sequence belongs to the universal ribosomal protein uL2 family. In terms of assembly, part of the 50S ribosomal subunit. Forms a bridge to the 30S subunit in the 70S ribosome.

In terms of biological role, one of the primary rRNA binding proteins. Required for association of the 30S and 50S subunits to form the 70S ribosome, for tRNA binding and peptide bond formation. It has been suggested to have peptidyltransferase activity; this is somewhat controversial. Makes several contacts with the 16S rRNA in the 70S ribosome. This chain is Large ribosomal subunit protein uL2, found in Baumannia cicadellinicola subsp. Homalodisca coagulata.